We begin with the raw amino-acid sequence, 338 residues long: Nucleoid-associated protein PA14_59050 (338 aa).

Belongs to the YejK family.

It is found in the cytoplasm. It localises to the nucleoid. The polypeptide is Nucleoid-associated protein PA14_59050 (Pseudomonas aeruginosa (strain UCBPP-PA14)).